A 486-amino-acid polypeptide reads, in one-letter code: Glutamyl-tRNA(Gln) amidotransferase subunit A (486 aa).

Active-site charge relay system residues include Lys74 and Ser149. Residue Ser173 is the Acyl-ester intermediate of the active site.

Belongs to the amidase family. GatA subfamily. As to quaternary structure, heterotrimer of A, B and C subunits.

The catalysed reaction is L-glutamyl-tRNA(Gln) + L-glutamine + ATP + H2O = L-glutaminyl-tRNA(Gln) + L-glutamate + ADP + phosphate + H(+). Allows the formation of correctly charged Gln-tRNA(Gln) through the transamidation of misacylated Glu-tRNA(Gln) in organisms which lack glutaminyl-tRNA synthetase. The reaction takes place in the presence of glutamine and ATP through an activated gamma-phospho-Glu-tRNA(Gln). The protein is Glutamyl-tRNA(Gln) amidotransferase subunit A of Prochlorococcus marinus (strain MIT 9303).